The primary structure comprises 192 residues: Large ribosomal subunit protein bL25 (192 aa).

It belongs to the bacterial ribosomal protein bL25 family. CTC subfamily. Part of the 50S ribosomal subunit; part of the 5S rRNA/L5/L18/L25 subcomplex. Contacts the 5S rRNA. Binds to the 5S rRNA independently of L5 and L18.

Functionally, this is one of the proteins that binds to the 5S RNA in the ribosome where it forms part of the central protuberance. The chain is Large ribosomal subunit protein bL25 from Solidesulfovibrio magneticus (strain ATCC 700980 / DSM 13731 / RS-1) (Desulfovibrio magneticus).